A 699-amino-acid polypeptide reads, in one-letter code: MAPKFEWWAKGNNNNTRKGTPVVVKMENPNNWSMVELESPSHDDFLVRTHEKSRNKNARQLTWVLLLKAHRAAGCLTSLGSALFALGTAVRRRIAAGRTDIEISSSGVGSLQKQNHTKKSKLFYSCLKVFLWLSLILLGFEIAAYFKGWSFGTSKLQLQFIFNKGFFDWVYTRWVLLRVEYLAPPLQFLANGCIVLFLVQSLDRLILCLGCFWIRFKKIKPVPKPDSISDLESGDNGAFLPMVLVQIPMCNEKEVYQQSIAAVCNLDWPKGKILIQILDDSDDPITQSLIKEEVHKWQKLGARIVYRHRVNREGYKAGNLKSAMNCSYVKDYEFVAIFDADFQPLPDFLKKTIPHFKDNEEIGLVQARWSFVNKEENLLTRLQNINLAFHFEVEQQVNSVFLNFFGFNGTAGVWRIKALEDSGGWLERTTVEDMDIAVRAHLHGWKFVFLNDVECQCELPESYEAYRKQQHRWHSGPMQLFRLCLPAVIKSKISIGKKFNLIFLFFLLRKLILPFYSFTLFCIILPMTMFVPEAELPAWVVCYIPATMSFLNILPAPKSFPFIVPYLLFENTMSVTKFNAMVSGLFQLGSAYEWVVTKKSGRSSEGDLAALVEKDEKTTKHQRGVSAPETEAEKKAEKTKRKKKKHNRIYMKELSLAFLLLTAATRSLLSAQGIHFYFLLFQGISFLLVGLDLIGEQVE.

The next 2 helical transmembrane spans lie at 126-146 and 194-214; these read CLKVFLWLSLILLGFEIAAYF and IVLFLVQSLDRLILCLGCFWI. Residue Asp280 is part of the active site. Substrate-binding residues include Asp339 and Asp341. Residue Asp433 is part of the active site. Helical transmembrane passes span 511-531 and 536-556; these read LILPFYSFTLFCIILPMTMFV and LPAWVVCYIPATMSFLNILPA. Residues 616 to 646 are disordered; that stretch reads EKTTKHQRGVSAPETEAEKKAEKTKRKKKKH. Glycyl lysine isopeptide (Lys-Gly) (interchain with G-Cter in ubiquitin) cross-links involve residues Lys617 and Lys620. Ser626 is modified (phosphoserine). Positions 637–646 are enriched in basic residues; it reads EKTKRKKKKH. Transmembrane regions (helical) follow at residues 649–668 and 674–694; these read IYMKELSLAFLLLTAATRSL and IHFYFLLFQGISFLLVGLDLI.

It belongs to the glycosyltransferase 2 family. Plant cellulose synthase-like C subfamily. As to quaternary structure, homodimer. Mainly expressed in roots, flowers and seeds, and, at very low levels, in seedlings, leaves and stems.

The protein localises to the golgi apparatus membrane. Probable beta-1,4-glucan synthase rather involved in the synthesis of the xyloglucan backbone than cellulose. Seems to work simultaneously with xyloglucan 6-xylosyltransferase. Xyloglucan is a noncellulosic polysaccharides of plant cell wall and consists of a glucan backbone substituted by xylose, galactose and fucose. The protein is Probable xyloglucan glycosyltransferase 12 of Arabidopsis thaliana (Mouse-ear cress).